A 330-amino-acid polypeptide reads, in one-letter code: Nodulation protein D 2 (330 aa).

Positions 6–63 constitute an HTH lysR-type domain; it reads LDLNLLVALDALITERNLSSAARKINLSQPAMSAAVARLRKHFRDELFGMRGRELVLS. The segment at residues 23–42 is a DNA-binding region (H-T-H motif); the sequence is LSSAARKINLSQPAMSAAVA. A disordered region spans residues 308-330; the sequence is RVTSSPEDAEPPGHFVRSVSPLP.

It belongs to the LysR transcriptional regulatory family.

In terms of biological role, nodD regulates the expression of the nodABCFE genes which encode other nodulation proteins. NodD is also a negative regulator of its own expression. Binds flavonoids as inducers. This Bradyrhizobium diazoefficiens (strain JCM 10833 / BCRC 13528 / IAM 13628 / NBRC 14792 / USDA 110) protein is Nodulation protein D 2 (nodD2).